The chain runs to 223 residues: N-terminal Xaa-Pro-Lys N-methyltransferase 1 (223 aa).

Residue methionine 1 is modified to N-acetylmethionine. Threonine 2 carries the post-translational modification N-acetylthreonine; in N-terminal Xaa-Pro-Lys N-methyltransferase 1, N-terminally processed. Residues glycine 69, arginine 74, 91-93 (DIT), 119-120 (LQ), and glutamine 135 contribute to the S-adenosyl-L-methionine site.

Belongs to the methyltransferase superfamily. NTM1 family.

It is found in the nucleus. It catalyses the reaction N-terminal L-alanyl-L-prolyl-L-lysyl-[protein] + 3 S-adenosyl-L-methionine = N-terminal N,N,N-trimethyl-L-alanyl-L-prolyl-L-lysyl-[protein] + 3 S-adenosyl-L-homocysteine + 3 H(+). The catalysed reaction is N-terminal L-seryl-L-prolyl-L-lysyl-[protein] + 3 S-adenosyl-L-methionine = N-terminal N,N,N-trimethyl-L-seryl-L-prolyl-L-lysyl-[protein] + 3 S-adenosyl-L-homocysteine + 3 H(+). The enzyme catalyses N-terminal L-prolyl-L-prolyl-L-lysyl-[protein] + 2 S-adenosyl-L-methionine = N-terminal N,N-dimethyl-L-prolyl-L-prolyl-L-lysyl-[protein] + 2 S-adenosyl-L-homocysteine + 2 H(+). Its function is as follows. Distributive alpha-N-methyltransferase that methylates the N-terminus of target proteins containing the N-terminal motif [Ala/Gly/Pro/Ser]-Pro-Lys when the initiator Met is cleaved. Specifically catalyzes mono-, di- or tri-methylation of the exposed alpha-amino group of the Ala, Gly or Ser residue in the [Ala/Gly/Ser]-Pro-Lys motif and mono- or di-methylation of Pro in the Pro-Pro-Lys motif. Some of the substrates may be primed by NTMT2-mediated monomethylation. Catalyzes the trimethylation of the N-terminal Gly in CENPA (after removal of Met-1). Responsible for the N-terminal methylation of KLHL31, MYL2, MYL3, RB1, RCC1, RPL23A and SET. Required during mitosis for normal bipolar spindle formation and chromosome segregation via its action on RCC1. The protein is N-terminal Xaa-Pro-Lys N-methyltransferase 1 (NTMT1) of Homo sapiens (Human).